Consider the following 152-residue polypeptide: Transcriptional regulator MraZ (152 aa).

SpoVT-AbrB domains follow at residues 5-52 and 81-124; these read ASAI…PIHE and AHEV…DEQA.

The protein belongs to the MraZ family. As to quaternary structure, forms oligomers.

The protein resides in the cytoplasm. The protein localises to the nucleoid. This is Transcriptional regulator MraZ from Shewanella oneidensis (strain ATCC 700550 / JCM 31522 / CIP 106686 / LMG 19005 / NCIMB 14063 / MR-1).